The sequence spans 306 residues: Latrophilin receptor-like protein A (306 aa).

Over 1–15 (MPSQLLNTVLSYLTD) the chain is Extracellular. Residues 16-36 (ILLSLSIVGSFLTIFTFMLYP) traverse the membrane as a helical segment. The Cytoplasmic portion of the chain corresponds to 37-41 (KLRSY). Residues 42 to 62 (PIKLIIYLCMSIVFSLFFFEI) traverse the membrane as a helical segment. The Extracellular segment spans residues 63-70 (SFRSSNSL). Residues 71–91 (FCIPAAILVHYFFLANFFWTF) form a helical membrane-spanning segment. At 92-113 (SVSFNFFQMIVKRNRDSEFYER) the chain is on the cytoplasmic side. A helical transmembrane segment spans residues 114–134 (YYHLISWGIPFIIIIFCAAFK). Residues 135–152 (KYVDRGGFCYLEDQYSVY) are Extracellular-facing. The chain crosses the membrane as a helical span at residues 153–173 (FGFFMPGVIIVCSNICIYVFV). The Cytoplasmic portion of the chain corresponds to 174-196 (AKEIYKTLRHTPTQKRQTVKEFR). The helical transmembrane segment at 197–217 (VYFSIFVSIGSSWIFGFIYMF) threads the bilayer. Residues 218–222 (SDSNS) are Extracellular-facing. The chain crosses the membrane as a helical span at residues 223-243 (IIGYIFLILFSISTSLQGFFI). Residues 244–306 (FISYCLNYKV…TTTTTNVYSA (63 aa)) are Cytoplasmic-facing. The disordered stretch occupies residues 279 to 306 (TTQSGPTGTTDSSSTMTSTTTTTNVYSA).

This sequence belongs to the G-protein coupled receptor 2 family. LN-TM7 subfamily.

It localises to the membrane. The protein is Latrophilin receptor-like protein A (lrlA) of Dictyostelium discoideum (Social amoeba).